Reading from the N-terminus, the 288-residue chain is Ribosomal RNA small subunit methyltransferase A (288 aa).

Positions 1-14 (MSKNQGGNKHQGGS) are enriched in polar residues. The disordered stretch occupies residues 1-21 (MSKNQGGNKHQGGSKTHLGHR). Residues Asn-29, Leu-31, Gly-56, Glu-77, Asp-102, and Asn-122 each coordinate S-adenosyl-L-methionine.

The protein belongs to the class I-like SAM-binding methyltransferase superfamily. rRNA adenine N(6)-methyltransferase family. RsmA subfamily.

Its subcellular location is the cytoplasm. The catalysed reaction is adenosine(1518)/adenosine(1519) in 16S rRNA + 4 S-adenosyl-L-methionine = N(6)-dimethyladenosine(1518)/N(6)-dimethyladenosine(1519) in 16S rRNA + 4 S-adenosyl-L-homocysteine + 4 H(+). Functionally, specifically dimethylates two adjacent adenosines (A1518 and A1519) in the loop of a conserved hairpin near the 3'-end of 16S rRNA in the 30S particle. May play a critical role in biogenesis of 30S subunits. The polypeptide is Ribosomal RNA small subunit methyltransferase A (Idiomarina loihiensis (strain ATCC BAA-735 / DSM 15497 / L2-TR)).